The sequence spans 110 residues: Senescence associated gene 20 (110 aa).

The sequence is that of Senescence associated gene 20 from Arabidopsis thaliana (Mouse-ear cress).